Reading from the N-terminus, the 293-residue chain is 4-hydroxy-tetrahydrodipicolinate synthase (293 aa).

T45 provides a ligand contact to pyruvate. The active-site Proton donor/acceptor is the Y133. Residue K162 is the Schiff-base intermediate with substrate of the active site. Residue I204 coordinates pyruvate.

This sequence belongs to the DapA family. In terms of assembly, homotetramer; dimer of dimers.

The protein localises to the cytoplasm. The enzyme catalyses L-aspartate 4-semialdehyde + pyruvate = (2S,4S)-4-hydroxy-2,3,4,5-tetrahydrodipicolinate + H2O + H(+). Its pathway is amino-acid biosynthesis; L-lysine biosynthesis via DAP pathway; (S)-tetrahydrodipicolinate from L-aspartate: step 3/4. Its function is as follows. Catalyzes the condensation of (S)-aspartate-beta-semialdehyde [(S)-ASA] and pyruvate to 4-hydroxy-tetrahydrodipicolinate (HTPA). The protein is 4-hydroxy-tetrahydrodipicolinate synthase of Chelativorans sp. (strain BNC1).